Reading from the N-terminus, the 271-residue chain is Gap junction beta-5 protein (271 aa).

At 1–20 (MNWSVFEGLLSGVNKYSTAF) the chain is on the cytoplasmic side. A helical transmembrane segment spans residues 21–40 (GRIWLSLVFVFRVLVYLVTA). At 41-75 (ERVWGDDQKDFDCNTRQPGCTNVCYDEFFPVSHVR) the chain is on the extracellular side. Residues 76-98 (LWALQLILVTCPSLLVVMHVAYR) form a helical membrane-spanning segment. The Cytoplasmic portion of the chain corresponds to 99-124 (KAREKKYQQEVGKGYLYPNPGKKRGG). Residues 125 to 147 (LWWTYVCSLLFKATIDIIFLYLF) form a helical membrane-spanning segment. Over 148-182 (HAFYPRYTLPSMVKCHSAPCPNTVDCFIAKPSEKN) the chain is Extracellular. Residues 183 to 205 (IFIVFMLVTAIVCILLNLVELLY) traverse the membrane as a helical segment. Residues 206–271 (LVIKRCSECA…PRAHVKKTIL (66 aa)) are Cytoplasmic-facing. The disordered stretch occupies residues 217–237 (AKRPPTAHAKNDPNWANPSSK).

It belongs to the connexin family. Beta-type (group I) subfamily. As to quaternary structure, a connexon is composed of a hexamer of connexins. In terms of tissue distribution, expressed in skin.

It localises to the cell membrane. It is found in the cell junction. The protein resides in the gap junction. One gap junction consists of a cluster of closely packed pairs of transmembrane channels, the connexons, through which materials of low MW diffuse from one cell to a neighboring cell. The chain is Gap junction beta-5 protein (Gjb5) from Rattus norvegicus (Rat).